A 275-amino-acid chain; its full sequence is Shikimate dehydrogenase (NADP(+)) (275 aa).

Shikimate-binding positions include 15–17 (SKS) and Thr-62. Lys-66 acts as the Proton acceptor in catalysis. Glu-78 contacts NADP(+). Residues Asn-87 and Asp-102 each coordinate shikimate. NADP(+) is bound by residues 128–132 (GAGGA), 151–156 (NRTAEK), and Leu-218. Tyr-220 contacts shikimate. Gly-241 contacts NADP(+).

The protein belongs to the shikimate dehydrogenase family. As to quaternary structure, homodimer.

The enzyme catalyses shikimate + NADP(+) = 3-dehydroshikimate + NADPH + H(+). It functions in the pathway metabolic intermediate biosynthesis; chorismate biosynthesis; chorismate from D-erythrose 4-phosphate and phosphoenolpyruvate: step 4/7. Its function is as follows. Involved in the biosynthesis of the chorismate, which leads to the biosynthesis of aromatic amino acids. Catalyzes the reversible NADPH linked reduction of 3-dehydroshikimate (DHSA) to yield shikimate (SA). The protein is Shikimate dehydrogenase (NADP(+)) of Shouchella clausii (strain KSM-K16) (Alkalihalobacillus clausii).